The chain runs to 110 residues: NADH-quinone oxidoreductase subunit K (110 aa).

The next 3 membrane-spanning stretches (helical) occupy residues 13–33 (LNHYLILSSLVFTIGMFGLFM), 41–61 (ILMSIELMLLAVNINFVAFSV), and 73–93 (IIILTVAAAETAIGLAILLIY).

It belongs to the complex I subunit 4L family. As to quaternary structure, NDH-1 is composed of 14 different subunits. Subunits NuoA, H, J, K, L, M, N constitute the membrane sector of the complex.

The protein resides in the cell inner membrane. The catalysed reaction is a quinone + NADH + 5 H(+)(in) = a quinol + NAD(+) + 4 H(+)(out). Functionally, NDH-1 shuttles electrons from NADH, via FMN and iron-sulfur (Fe-S) centers, to quinones in the respiratory chain. The immediate electron acceptor for the enzyme in this species is believed to be ubiquinone. Couples the redox reaction to proton translocation (for every two electrons transferred, four hydrogen ions are translocated across the cytoplasmic membrane), and thus conserves the redox energy in a proton gradient. This chain is NADH-quinone oxidoreductase subunit K, found in Rickettsia prowazekii (strain Madrid E).